A 233-amino-acid chain; its full sequence is Large ribosomal subunit protein uL1 (233 aa).

The protein belongs to the universal ribosomal protein uL1 family. Part of the 50S ribosomal subunit.

Functionally, binds directly to 23S rRNA. The L1 stalk is quite mobile in the ribosome, and is involved in E site tRNA release. Its function is as follows. Protein L1 is also a translational repressor protein, it controls the translation of the L11 operon by binding to its mRNA. The polypeptide is Large ribosomal subunit protein uL1 (Aeromonas hydrophila subsp. hydrophila (strain ATCC 7966 / DSM 30187 / BCRC 13018 / CCUG 14551 / JCM 1027 / KCTC 2358 / NCIMB 9240 / NCTC 8049)).